We begin with the raw amino-acid sequence, 511 residues long: Caspase-8 (511 aa).

Positions 1 to 242 are excised as a propeptide; it reads MSGHNILTQL…MDGNGIANES (242 aa). Catalysis depends on residues His-352 and Cys-393. The propeptide occupies 406–415; that stretch reads KINASTKSPC.

Belongs to the peptidase C14A family. In terms of assembly, heterotetramer that consists of two anti-parallel arranged heterodimers, each one formed by a 15 kDa (caspase-8 subunit p15) and a 10 kDa (caspase-8 subunit p10) subunit. Interacts with the N-terminus of Fadd.

It localises to the cytoplasm. It carries out the reaction Strict requirement for Asp at position P1 and has a preferred cleavage sequence of (Leu/Asp/Val)-Glu-Thr-Asp-|-(Gly/Ser/Ala).. Effector of the programmed cell death (PCD) activators rpr, grim and W. May play an apoptotic role in the germline as well as soma. Role in immune response, required to resist Gram-negative bacterial infections by regulating DptA. Fadd interacts with Dredd, Fadd promotes cleavage of Dredd and is necessary and sufficient for enhancing Dredd-induced apoptosis. The chain is Caspase-8 from Drosophila pseudoobscura pseudoobscura (Fruit fly).